The following is a 143-amino-acid chain: MFKEFREFAMKGNVVDLAVGVIIGAAFGGIVSSLVADVIMPIIGAITGGLDFSNYFTPLSKAVTANTLVEAKKQGAVLAWGSFLTLTLNFLIVAFVLFLVVRAMNRLKRKDEAAPAPPAKPTPEQELLAEIRDILKSGSRPQA.

2 helical membrane passes run 19-39 and 81-101; these read VGVI…ADVI and GSFL…FLVV.

Belongs to the MscL family. As to quaternary structure, homopentamer.

Its subcellular location is the cell inner membrane. In terms of biological role, channel that opens in response to stretch forces in the membrane lipid bilayer. May participate in the regulation of osmotic pressure changes within the cell. This is Large-conductance mechanosensitive channel from Rhodopseudomonas palustris (strain HaA2).